Consider the following 121-residue polypeptide: Small ribosomal subunit protein uS13 (121 aa).

Positions 94 to 121 are disordered; sequence GLPVRGQKTRNNAHTVKGKPKAIAGKKK. Residues 109 to 121 are compositionally biased toward basic residues; that stretch reads VKGKPKAIAGKKK.

The protein belongs to the universal ribosomal protein uS13 family. Part of the 30S ribosomal subunit. Forms a loose heterodimer with protein S19. Forms two bridges to the 50S subunit in the 70S ribosome.

Functionally, located at the top of the head of the 30S subunit, it contacts several helices of the 16S rRNA. In the 70S ribosome it contacts the 23S rRNA (bridge B1a) and protein L5 of the 50S subunit (bridge B1b), connecting the 2 subunits; these bridges are implicated in subunit movement. Contacts the tRNAs in the A and P-sites. The polypeptide is Small ribosomal subunit protein uS13 (Onion yellows phytoplasma (strain OY-M)).